The chain runs to 262 residues: 4-hydroxy-2-oxo-heptane-1,7-dioate aldolase (262 aa).

Residue H45 is the Proton acceptor of the active site. Q147 is a substrate binding site. A divalent metal cation is bound at residue E149. Substrate contacts are provided by A174 and D175. A divalent metal cation is bound at residue D175.

It belongs to the HpcH/HpaI aldolase family. Homohexamer; trimer of dimers. The cofactor is a divalent metal cation.

The catalysed reaction is 4-hydroxy-2-oxoheptanedioate = succinate semialdehyde + pyruvate. Its pathway is aromatic compound metabolism; 4-hydroxyphenylacetate degradation; pyruvate and succinate semialdehyde from 4-hydroxyphenylacetate: step 7/7. Catalyzes the reversible retro-aldol cleavage of 4-hydroxy-2-ketoheptane-1,7-dioate (HKHD) to pyruvate and succinic semialdehyde. The sequence is that of 4-hydroxy-2-oxo-heptane-1,7-dioate aldolase from Shigella boydii serotype 4 (strain Sb227).